The sequence spans 603 residues: F-box only protein 46 (603 aa).

Residues Ser18–Glu54 are disordered. Phosphoserine is present on residues Ser21 and Ser67. Disordered regions lie at residues Ser113–Asp165, Glu235–Lys301, Glu332–Cys359, and Gln412–Asp442. Thr347 is subject to Phosphothreonine. 2 stretches are compositionally biased toward pro residues: residues Thr347–Ala356 and Glu417–Asp426. Positions Arg470–Asp522 constitute an F-box domain.

Part of a SCF (SKP1-cullin-F-box) protein ligase complex SCF(FBXO46) composed of CUL1, SKP1, RBX1 and FBXO46. In terms of processing, phosphorylated by ATM in response to DNA damage, promoting ubiquitination and degradation by the SCF(FBXO31) complex. Post-translationally, ATM-phosphorylated FBXO46 is ubiquitinated and degradaded by the SCF(FBXO31) complex in response to DNA damage.

It functions in the pathway protein modification; protein ubiquitination. Functionally, substrate-recognition component of the SCF(FBXO46) protein ligase complex, which mediates the ubiquitination and degradation of target proteins. In absence of stress, the SCF(FBXO46) complex catalyzes ubiquitination and degradation of MTOR-phosphorylated FBXO31. In Mus musculus (Mouse), this protein is F-box only protein 46 (Fbxo46).